Consider the following 492-residue polypeptide: RNA-binding protein Nova-2 (492 aa).

Positions 10 to 26 match the Bipartite nuclear localization signal motif; it reads KRPLETPPEVVCTKRSN. Positions 32-99 constitute a KH 1 domain; that stretch reads EYFLKVLIPS…EALNAVHSFI (68 aa). A Glycyl lysine isopeptide (Lys-Gly) (interchain with G-Cter in SUMO2) cross-link involves residue K112. 2 consecutive KH domains span residues 130 to 196 and 406 to 473; these read AKQA…VSAI and KELV…QYLI.

As to quaternary structure, interacts with PTBP2; the interaction is direct. Brain. Expression restricted to astrocytes.

The protein resides in the nucleus. Its function is as follows. Functions to regulate alternative splicing in neurons by binding pre-mRNA in a sequence-specific manner to activate exon inclusion or exclusion. It binds specifically to the sequences 5'-YCAY-3' and regulates splicing in only a subset of regulated exons. Binding to an exonic 5'-YCAY-3' cluster changes the protein complexes assembled on pre-mRNA, blocking U1 snRNP binding and exon inclusion, whereas binding to an intronic 5'-YCAY-3' cluster enhances spliceosome assembly and exon inclusion. With NOVA1, they perform unique biological functions in different brain areas and cell types. Uniquely regulates alternative splicing events of a series of axon guidance related genes during cortical development, being essential for central nervous system development by regulating neural networks wiring. Regulates differentially alternative splicing on the same transcripts expressed in different neurons. This includes functional differences in transcripts expressed in cortical and cerebellar excitatory versus inhibitory neurons where is required for, respectively, development of laminar structure and motor coordination and synapse formation. Also the regulation the regulation of intron retention can sequester the trans-acting splicing factor PTBP2, acting as a variable cis-acting scaffolding platform for PTBP2 across various natural conditions. The chain is RNA-binding protein Nova-2 from Homo sapiens (Human).